We begin with the raw amino-acid sequence, 170 residues long: MTTGALPSTPANEPLIKSADNVANLIESFIELGVLVHDNQGTPQSNQALMNKLNQLISQLSQTSTTANDPNDANTNLKQFLIPIDVISYIEDGRNPDIYTREFIEVNAKSNARLKGKMLGFKKLRDVFGDKLKQEFPQLEKGVDDIINRTNDNSSHTASVITDTANNNNS.

The protein belongs to the Mediator complex subunit 10 family. Component of the Mediator complex.

It is found in the nucleus. In terms of biological role, component of the Mediator complex, a coactivator involved in the regulated transcription of nearly all RNA polymerase II-dependent genes. Mediator functions as a bridge to convey information from gene-specific regulatory proteins to the basal RNA polymerase II transcription machinery. Mediator is recruited to promoters by direct interactions with regulatory proteins and serves as a scaffold for the assembly of a functional preinitiation complex with RNA polymerase II and the general transcription factors. The chain is Mediator of RNA polymerase II transcription subunit 10 (NUT2) from Candida albicans (strain SC5314 / ATCC MYA-2876) (Yeast).